A 465-amino-acid chain; its full sequence is Sodium-dependent phosphate transport protein 1 (465 aa).

N-linked (GlcNAc...) asparagine glycans are attached at residues asparagine 39, asparagine 47, and asparagine 56. 10 helical membrane passes run 79–99 (GLVL…VGYL), 117–137 (SVLS…VIVC), 176–196 (FVMG…LLGW), 199–219 (VFYI…ILLF), 260–280 (LPLW…NLLV), 299–319 (GLLS…AGQM), 337–357 (LFTT…LYLS), 363–383 (TVIF…GQLI), 399–419 (VTAL…GLIL), and 431–451 (FFLM…FAKG).

Belongs to the major facilitator superfamily. Sodium/anion cotransporter family. In terms of assembly, interacts with PDZK1.

It is found in the apical cell membrane. The enzyme catalyses 3 Na(+)(out) + phosphate(out) = 3 Na(+)(in) + phosphate(in). The catalysed reaction is urate(out) = urate(in). In terms of biological role, important for the resorption of phosphate by the kidney. May be involved in actively transporting phosphate into cells via Na(+) cotransport in the renal brush border membrane. Plays a role in urate transport in the kidney. In Rattus norvegicus (Rat), this protein is Sodium-dependent phosphate transport protein 1 (Slc17a1).